The following is a 223-amino-acid chain: Ribose-5-phosphate isomerase A (223 aa).

Substrate-binding positions include 26–29 (TGST), 82–85 (DGAD), and 95–98 (KGGG). The Proton acceptor role is filled by Glu104. Substrate is bound at residue Lys122.

Belongs to the ribose 5-phosphate isomerase family. As to quaternary structure, homodimer.

It catalyses the reaction aldehydo-D-ribose 5-phosphate = D-ribulose 5-phosphate. It participates in carbohydrate degradation; pentose phosphate pathway; D-ribose 5-phosphate from D-ribulose 5-phosphate (non-oxidative stage): step 1/1. In terms of biological role, catalyzes the reversible conversion of ribose-5-phosphate to ribulose 5-phosphate. The chain is Ribose-5-phosphate isomerase A from Streptococcus agalactiae serotype Ia (strain ATCC 27591 / A909 / CDC SS700).